The primary structure comprises 250 residues: Ribosomal RNA small subunit methyltransferase J (250 aa).

S-adenosyl-L-methionine is bound by residues 101-102 (RD), 117-118 (ER), 153-154 (SS), and Asp-171.

The protein belongs to the methyltransferase superfamily. RsmJ family.

It localises to the cytoplasm. The enzyme catalyses guanosine(1516) in 16S rRNA + S-adenosyl-L-methionine = N(2)-methylguanosine(1516) in 16S rRNA + S-adenosyl-L-homocysteine + H(+). Functionally, specifically methylates the guanosine in position 1516 of 16S rRNA. The sequence is that of Ribosomal RNA small subunit methyltransferase J from Escherichia coli O81 (strain ED1a).